Here is a 243-residue protein sequence, read N- to C-terminus: Glucosamine-6-phosphate deaminase (243 aa).

Residue aspartate 67 is the Proton acceptor; for enolization step of the active site. The For ring-opening step role is filled by asparagine 137. The active-site Proton acceptor; for ring-opening step is histidine 139. The active-site For ring-opening step is glutamate 144.

The protein belongs to the glucosamine/galactosamine-6-phosphate isomerase family. NagB subfamily.

The enzyme catalyses alpha-D-glucosamine 6-phosphate + H2O = beta-D-fructose 6-phosphate + NH4(+). The protein operates within amino-sugar metabolism; N-acetylneuraminate degradation; D-fructose 6-phosphate from N-acetylneuraminate: step 5/5. Its function is as follows. Catalyzes the reversible isomerization-deamination of glucosamine 6-phosphate (GlcN6P) to form fructose 6-phosphate (Fru6P) and ammonium ion. The chain is Glucosamine-6-phosphate deaminase from Staphylococcus epidermidis (strain ATCC 35984 / DSM 28319 / BCRC 17069 / CCUG 31568 / BM 3577 / RP62A).